The chain runs to 188 residues: Elongation factor P (188 aa).

It belongs to the elongation factor P family.

The protein resides in the cytoplasm. It participates in protein biosynthesis; polypeptide chain elongation. Its function is as follows. Involved in peptide bond synthesis. Stimulates efficient translation and peptide-bond synthesis on native or reconstituted 70S ribosomes in vitro. Probably functions indirectly by altering the affinity of the ribosome for aminoacyl-tRNA, thus increasing their reactivity as acceptors for peptidyl transferase. This chain is Elongation factor P, found in Wolbachia sp. subsp. Brugia malayi (strain TRS).